Consider the following 273-residue polypeptide: R-spondin-3 (273 aa).

The signal sequence occupies residues 1–21 (MHLRLISWFFIILNFMEYIGS). 2 FU repeats span residues 35–86 (PNVS…GYYG) and 92–135 (INKC…GLEA). An N-linked (GlcNAc...) asparagine glycan is attached at Asn36. Intrachain disulfides connect Cys41/Cys48, Cys45/Cys54, Cys57/Cys76, Cys80/Cys95, Cys98/Cys105, Cys102/Cys111, Cys114/Cys125, Cys129/Cys142, Cys148/Cys190, Cys159/Cys166, and Cys199/Cys206. Residues 147-207 (HCEASEWSPW…KCTVQRKKCP (61 aa)) enclose the TSP type-1 domain. Positions 201-273 (VQRKKCPKGE…QKSVSVSTVH (73 aa)) are disordered. Residues 213-223 (RKGRERKRKKP) show a composition bias toward basic residues. A compositionally biased stretch (basic and acidic residues) spans 224–252 (NKEESKDAIPDNKGLEPSRETPEQRENKQ).

This sequence belongs to the R-spondin family. Interacts with the extracellular domain of FZD8 and LRP6. It however does not form a ternary complex with FZD8 and LRP6. Interacts with WNT1. Binds heparin. Interacts with LGR4, LGR5 and LGR6.

The protein localises to the secreted. Functionally, activator of the canonical Wnt signaling pathway by acting as a ligand for LGR4-6 receptors, which acts as a key regulator of angiogenesis. Upon binding to LGR4-6 (LGR4, LGR5 or LGR6), LGR4-6 associate with phosphorylated LRP6 and frizzled receptors that are activated by extracellular Wnt receptors, triggering the canonical Wnt signaling pathway to increase expression of target genes. Also regulates the canonical Wnt/beta-catenin-dependent pathway and non-canonical Wnt signaling by acting as an inhibitor of ZNRF3, an important regulator of the Wnt signaling pathway. Acts as a ligand for frizzled FZD8 and LRP6. May negatively regulate the TGF-beta pathway. Acts as a key regulator of angiogenesis by controlling vascular stability and pruning: acts by activating the non-canonical Wnt signaling pathway in endothelial cells. Can also amplify Wnt signaling pathway independently of LGR4-6 receptors, possibly by acting as a direct antagonistic ligand to RNF43 and ZNRF3. This Bos taurus (Bovine) protein is R-spondin-3 (RSPO3).